The sequence spans 403 residues: S-adenosylmethionine synthase (403 aa).

His-15 is a binding site for ATP. Asp-17 lines the Mg(2+) pocket. Glu-43 provides a ligand contact to K(+). Residues Glu-56 and Gln-99 each coordinate L-methionine. The flexible loop stretch occupies residues 99-109 (QSPHIAQGVDR). ATP is bound by residues 166–168 (DAK), 232–233 (KF), Asp-241, 247–248 (RK), Ala-264, and Lys-268. Asp-241 is a binding site for L-methionine. Lys-272 is an L-methionine binding site.

Belongs to the AdoMet synthase family. Homotetramer; dimer of dimers. Mg(2+) serves as cofactor. Requires K(+) as cofactor.

The protein resides in the cytoplasm. The enzyme catalyses L-methionine + ATP + H2O = S-adenosyl-L-methionine + phosphate + diphosphate. The protein operates within amino-acid biosynthesis; S-adenosyl-L-methionine biosynthesis; S-adenosyl-L-methionine from L-methionine: step 1/1. In terms of biological role, catalyzes the formation of S-adenosylmethionine (AdoMet) from methionine and ATP. The overall synthetic reaction is composed of two sequential steps, AdoMet formation and the subsequent tripolyphosphate hydrolysis which occurs prior to release of AdoMet from the enzyme. In Stenotrophomonas maltophilia (strain R551-3), this protein is S-adenosylmethionine synthase.